The primary structure comprises 209 residues: Small ribosomal subunit protein uS4 (209 aa).

Residues Cys9, Cys12, Cys26, and Cys31 each coordinate Zn(2+). The segment at 9 to 31 (CKLCRREGMKLYLKGERCYTDKC) adopts a C4-type zinc-finger fold. An S4 RNA-binding domain is found at 98 to 161 (ARLDNVVYRM…RDLEVIKKAI (64 aa)).

This sequence belongs to the universal ribosomal protein uS4 family. In terms of assembly, part of the 30S ribosomal subunit. Contacts protein S5. The interaction surface between S4 and S5 is involved in control of translational fidelity. Zn(2+) serves as cofactor.

Functionally, one of the primary rRNA binding proteins, it binds directly to 16S rRNA where it nucleates assembly of the body of the 30S subunit. In terms of biological role, with S5 and S12 plays an important role in translational accuracy. This Thermotoga maritima (strain ATCC 43589 / DSM 3109 / JCM 10099 / NBRC 100826 / MSB8) protein is Small ribosomal subunit protein uS4 (rpsD).